The primary structure comprises 319 residues: Carbonic anhydrase, chloroplastic (319 aa).

A chloroplast-targeting transit peptide spans 1–98 (MSTINGCLTS…AASKVAQITS (98 aa)).

It belongs to the beta-class carbonic anhydrase family. Homohexamer.

It localises to the plastid. The protein localises to the chloroplast stroma. It carries out the reaction hydrogencarbonate + H(+) = CO2 + H2O. In terms of biological role, reversible hydration of carbon dioxide. The sequence is that of Carbonic anhydrase, chloroplastic from Spinacia oleracea (Spinach).